The following is a 188-amino-acid chain: Segregation and condensation protein B (188 aa).

This sequence belongs to the ScpB family. Homodimer. Homodimerization may be required to stabilize the binding of ScpA to the Smc head domains. Component of a cohesin-like complex composed of ScpA, ScpB and the Smc homodimer, in which ScpA and ScpB bind to the head domain of Smc. The presence of the three proteins is required for the association of the complex with DNA.

The protein localises to the cytoplasm. Participates in chromosomal partition during cell division. May act via the formation of a condensin-like complex containing Smc and ScpA that pull DNA away from mid-cell into both cell halves. The polypeptide is Segregation and condensation protein B (Streptococcus gordonii (strain Challis / ATCC 35105 / BCRC 15272 / CH1 / DL1 / V288)).